Here is a 224-residue protein sequence, read N- to C-terminus: Small ribosomal subunit protein uS5 (224 aa).

The disordered stretch occupies residues 1–38 (MAEQSAGGQGAPEGRDSRDSREGRGRRDGGRGGRDSDK). The span at 13–38 (EGRDSRDSREGRGRRDGGRGGRDSDK) shows a compositional bias: basic and acidic residues. Residues 41–104 (YLERVVAINR…EEARKGFFRV (64 aa)) form the S5 DRBM domain.

This sequence belongs to the universal ribosomal protein uS5 family. As to quaternary structure, part of the 30S ribosomal subunit. Contacts proteins S4 and S8.

Functionally, with S4 and S12 plays an important role in translational accuracy. Its function is as follows. Located at the back of the 30S subunit body where it stabilizes the conformation of the head with respect to the body. The sequence is that of Small ribosomal subunit protein uS5 from Mycobacterium ulcerans (strain Agy99).